Reading from the N-terminus, the 262-residue chain is Sperm microtubule inner protein 6 (262 aa).

Belongs to the SPMIP6 family. As to quaternary structure, microtubule inner protein component of sperm flagellar doublet microtubules. Interacts with alpha-tubulin. Expressed in testis. Strongly expressed in ciliated epithelial cells with lower levels in goblet cells (at protein level).

The protein localises to the cytoplasm. It is found in the cytoskeleton. Its subcellular location is the nucleus. It localises to the mitochondrion. The protein resides in the flagellum axoneme. Its function is as follows. May participate in intramanchette transport and midpiece formation of the sperm tail. May play a potential role in somatic cell proliferation. In Homo sapiens (Human), this protein is Sperm microtubule inner protein 6.